A 216-amino-acid chain; its full sequence is Ribosomal RNA large subunit methyltransferase E (216 aa).

Gly67, Trp69, Asp87, Asp103, and Asp128 together coordinate S-adenosyl-L-methionine. Lys168 functions as the Proton acceptor in the catalytic mechanism.

Belongs to the class I-like SAM-binding methyltransferase superfamily. RNA methyltransferase RlmE family.

The protein localises to the cytoplasm. It carries out the reaction uridine(2552) in 23S rRNA + S-adenosyl-L-methionine = 2'-O-methyluridine(2552) in 23S rRNA + S-adenosyl-L-homocysteine + H(+). Its function is as follows. Specifically methylates the uridine in position 2552 of 23S rRNA at the 2'-O position of the ribose in the fully assembled 50S ribosomal subunit. This chain is Ribosomal RNA large subunit methyltransferase E, found in Acinetobacter baumannii (strain AB307-0294).